The following is a 426-amino-acid chain: Lipid droplet localized protein (426 aa).

The chain crosses the membrane as a helical span at residues phenylalanine 278–phenylalanine 298.

The protein belongs to the saccharopine dehydrogenase family.

The protein localises to the membrane. It is found in the lipid droplet. The polypeptide is Lipid droplet localized protein (Caenorhabditis elegans).